Reading from the N-terminus, the 101-residue chain is NAD(P)H-quinone oxidoreductase subunit 4L, chloroplastic (101 aa).

The next 3 membrane-spanning stretches (helical) occupy residues 2–22 (IFEHALVLSAFLFSIGIYGLI), 32–52 (MCLELILNAVNINLVTFSDFF), and 61–81 (IFSIFVIAVAAAEAAIGPAIV).

The protein belongs to the complex I subunit 4L family. In terms of assembly, NDH is composed of at least 16 different subunits, 5 of which are encoded in the nucleus.

It localises to the plastid. The protein resides in the chloroplast thylakoid membrane. It carries out the reaction a plastoquinone + NADH + (n+1) H(+)(in) = a plastoquinol + NAD(+) + n H(+)(out). It catalyses the reaction a plastoquinone + NADPH + (n+1) H(+)(in) = a plastoquinol + NADP(+) + n H(+)(out). Its function is as follows. NDH shuttles electrons from NAD(P)H:plastoquinone, via FMN and iron-sulfur (Fe-S) centers, to quinones in the photosynthetic chain and possibly in a chloroplast respiratory chain. The immediate electron acceptor for the enzyme in this species is believed to be plastoquinone. Couples the redox reaction to proton translocation, and thus conserves the redox energy in a proton gradient. This Phaseolus vulgaris (Kidney bean) protein is NAD(P)H-quinone oxidoreductase subunit 4L, chloroplastic.